The sequence spans 142 residues: Large ribosomal subunit protein mL43 (142 aa).

Belongs to the mitochondrion-specific ribosomal protein mL43 family. In terms of assembly, component of the mitochondrial large ribosomal subunit. Mature mitochondrial ribosomes consist of a small (37S) and a large (54S) subunit. The 37S subunit contains at least 33 different proteins and 1 molecule of RNA (15S). The 54S subunit contains at least 45 different proteins and 1 molecule of RNA (21S).

It localises to the mitochondrion. The protein is Large ribosomal subunit protein mL43 (MRPL51) of Eremothecium gossypii (strain ATCC 10895 / CBS 109.51 / FGSC 9923 / NRRL Y-1056) (Yeast).